The chain runs to 411 residues: Imidazolonepropionase (411 aa).

Fe(3+) is bound by residues histidine 78 and histidine 80. Residues histidine 78 and histidine 80 each coordinate Zn(2+). 4-imidazolone-5-propanoate-binding residues include arginine 87, tyrosine 150, and histidine 183. Residue tyrosine 150 participates in N-formimidoyl-L-glutamate binding. Histidine 248 is a binding site for Fe(3+). Residue histidine 248 participates in Zn(2+) binding. Glutamine 251 serves as a coordination point for 4-imidazolone-5-propanoate. Aspartate 322 is a Fe(3+) binding site. A Zn(2+)-binding site is contributed by aspartate 322. N-formimidoyl-L-glutamate contacts are provided by asparagine 324 and glycine 326. Serine 327 lines the 4-imidazolone-5-propanoate pocket.

It belongs to the metallo-dependent hydrolases superfamily. HutI family. The cofactor is Zn(2+). Fe(3+) serves as cofactor.

It localises to the cytoplasm. It catalyses the reaction 4-imidazolone-5-propanoate + H2O = N-formimidoyl-L-glutamate. Its pathway is amino-acid degradation; L-histidine degradation into L-glutamate; N-formimidoyl-L-glutamate from L-histidine: step 3/3. Catalyzes the hydrolytic cleavage of the carbon-nitrogen bond in imidazolone-5-propanoate to yield N-formimidoyl-L-glutamate. It is the third step in the universal histidine degradation pathway. This Flavobacterium johnsoniae (strain ATCC 17061 / DSM 2064 / JCM 8514 / BCRC 14874 / CCUG 350202 / NBRC 14942 / NCIMB 11054 / UW101) (Cytophaga johnsonae) protein is Imidazolonepropionase.